The primary structure comprises 834 residues: MSSELTRRNLLKAHAAGIAAATAGIALPAAAQPVPGGVSALQIKWSKAPCRFCGTGCGVMVGVKEGKVVATHGDMQAEVNRGLNCIKGYFLSKIMYGKDRLETPLLRKKNGVYAKDGEFEPVSWDEAFDVMAQQCKRVLKEKGPTAVGMFGSGQWTIFEGYAATKLMRAGFRSNNLDPNARHCMASAAYAFMRTFGMDEPMGCYDDFEHADAFVLWGSNMAEMHPILWTRIADRRLGFDHVRVAVLSTFTHRSMDLADIPMVFKPGTDLVILNYIANHIIKTGRVNEDFVRNHTKFVRGVTDIGYGLRPDDPVEVNAANSADPTKTEAIDFETFKEFVSEYTLEKTAAMTGVEAGFLEELAELYADPKRKVMSLWTMGFNQHVRGVWANQMVYNIHLLTGKISEPGNSPFSLTGQPSACGTAREVGTFAHRLPADMTVTNPEHRKHAEEIWRIPHGIIPEKPGYHAVQQDRMLHDGKLNFYWVQVNNNVQAGPNTKNETYLGYRNPENFIVVSDAYPTITAMSADLILPAAMWVEKEGAYGNAERRTHVWHQLVEASGEARSDLWQLVEFSKRFTTDEVWPAEILDANPAYRGKTLYEVLYKDSDVGKFPLSEINADYKNQESSDFGFYLQKGLFEEYAAFGRGHGHDLAPYDAYHEVRGMRWPVVDGKETLWRYREGYDPYVKPGEGVKFYGNKDGRAVIIAVPYEPPAESPDQEFDTWLVTGRVLEHWHSGSMTMRVPELYKAFPGARCFMNADDARKRGLNQGAEIRIVSRRGEIRSRVETRGRNRMPPGVIFVPWFDASQLINKVTLDATDPISKQTDFKKCAVKIEPVA.

A signal peptide (tat-type signal) is located at residues Met-1–Ala-31. The region spanning Ile-43–Asp-99 is the 4Fe-4S Mo/W bis-MGD-type domain. [4Fe-4S] cluster-binding residues include Cys-50, Cys-53, Cys-57, and Cys-85. Mo-bis(molybdopterin guanine dinucleotide) contacts are provided by residues Lys-87, Gln-154, Asn-179, Cys-183, Trp-216–Met-223, Ser-247–His-251, Gly-266–Asp-268, Met-377, Gln-381, Asn-487, Ser-513–Asp-514, Lys-536, Asp-563, and Thr-723–Ser-732. Trp-799 contributes to the substrate binding site. Mo-bis(molybdopterin guanine dinucleotide)-binding residues include Asn-807 and Lys-824.

The protein belongs to the prokaryotic molybdopterin-containing oxidoreductase family. NasA/NapA/NarB subfamily. Component of the periplasmic nitrate reductase NapAB complex composed of NapA and NapB. The cofactor is [4Fe-4S] cluster. Requires Mo-bis(molybdopterin guanine dinucleotide) as cofactor. In terms of processing, predicted to be exported by the Tat system. The position of the signal peptide cleavage has not been experimentally proven.

Its subcellular location is the periplasm. The enzyme catalyses 2 Fe(II)-[cytochrome] + nitrate + 2 H(+) = 2 Fe(III)-[cytochrome] + nitrite + H2O. Functionally, catalytic subunit of the periplasmic nitrate reductase complex NapAB. Receives electrons from NapB and catalyzes the reduction of nitrate to nitrite. This Agrobacterium fabrum (strain C58 / ATCC 33970) (Agrobacterium tumefaciens (strain C58)) protein is Periplasmic nitrate reductase.